The following is a 268-amino-acid chain: Tryptophan synthase alpha chain (268 aa).

Residues E49 and D60 each act as proton acceptor in the active site.

Belongs to the TrpA family. Tetramer of two alpha and two beta chains.

The catalysed reaction is (1S,2R)-1-C-(indol-3-yl)glycerol 3-phosphate + L-serine = D-glyceraldehyde 3-phosphate + L-tryptophan + H2O. It participates in amino-acid biosynthesis; L-tryptophan biosynthesis; L-tryptophan from chorismate: step 5/5. The alpha subunit is responsible for the aldol cleavage of indoleglycerol phosphate to indole and glyceraldehyde 3-phosphate. The sequence is that of Tryptophan synthase alpha chain from Escherichia coli (strain SMS-3-5 / SECEC).